Reading from the N-terminus, the 414-residue chain is tRNA(Ile)-lysidine synthase (414 aa).

ATP is bound at residue 13 to 18; that stretch reads SGGIDS.

This sequence belongs to the tRNA(Ile)-lysidine synthase family.

Its subcellular location is the cytoplasm. The catalysed reaction is cytidine(34) in tRNA(Ile2) + L-lysine + ATP = lysidine(34) in tRNA(Ile2) + AMP + diphosphate + H(+). Ligates lysine onto the cytidine present at position 34 of the AUA codon-specific tRNA(Ile) that contains the anticodon CAU, in an ATP-dependent manner. Cytidine is converted to lysidine, thus changing the amino acid specificity of the tRNA from methionine to isoleucine. The polypeptide is tRNA(Ile)-lysidine synthase (Thermotoga maritima (strain ATCC 43589 / DSM 3109 / JCM 10099 / NBRC 100826 / MSB8)).